The sequence spans 192 residues: 3-hydroxyanthranilate 3,4-dioxygenase (192 aa).

Arg-50 is an O2 binding site. Fe cation-binding residues include His-54, Glu-60, and His-102. Glu-60 provides a ligand contact to substrate. Residues Arg-106 and Glu-116 each coordinate substrate. Residues Cys-131, Cys-134, Cys-168, and Cys-171 each contribute to the a divalent metal cation site.

It belongs to the 3-HAO family. The cofactor is Fe(2+).

Its subcellular location is the cytoplasm. It carries out the reaction 3-hydroxyanthranilate + O2 = (2Z,4Z)-2-amino-3-carboxymuconate 6-semialdehyde. It participates in cofactor biosynthesis; NAD(+) biosynthesis; quinolinate from L-kynurenine: step 3/3. In terms of biological role, catalyzes the oxidative ring opening of 3-hydroxyanthranilate to 2-amino-3-carboxymuconate semialdehyde, which spontaneously cyclizes to quinolinate. The chain is 3-hydroxyanthranilate 3,4-dioxygenase (bna1) from Neosartorya fischeri (strain ATCC 1020 / DSM 3700 / CBS 544.65 / FGSC A1164 / JCM 1740 / NRRL 181 / WB 181) (Aspergillus fischerianus).